A 65-amino-acid polypeptide reads, in one-letter code: DNA-directed RNA polymerase subunit Rpo10 (65 aa).

Zn(2+) contacts are provided by cysteine 7, cysteine 10, cysteine 44, and cysteine 45.

This sequence belongs to the archaeal Rpo10/eukaryotic RPB10 RNA polymerase subunit family. In terms of assembly, part of the RNA polymerase complex. Zn(2+) is required as a cofactor.

It localises to the cytoplasm. The enzyme catalyses RNA(n) + a ribonucleoside 5'-triphosphate = RNA(n+1) + diphosphate. Its function is as follows. DNA-dependent RNA polymerase (RNAP) catalyzes the transcription of DNA into RNA using the four ribonucleoside triphosphates as substrates. In Thermococcus onnurineus (strain NA1), this protein is DNA-directed RNA polymerase subunit Rpo10.